Here is a 101-residue protein sequence, read N- to C-terminus: Small ribosomal subunit protein uS14 (101 aa).

This sequence belongs to the universal ribosomal protein uS14 family. Part of the 30S ribosomal subunit. Contacts proteins S3 and S10.

Functionally, binds 16S rRNA, required for the assembly of 30S particles and may also be responsible for determining the conformation of the 16S rRNA at the A site. This is Small ribosomal subunit protein uS14 from Photobacterium profundum (strain SS9).